Reading from the N-terminus, the 200-residue chain is Protein GrpE (200 aa).

A compositionally biased stretch (basic and acidic residues) spans 1 to 27 (MTKQEKAENQEKPTEETVEETPKKETP). The interval 1 to 50 (MTKQEKAENQEKPTEETVEETPKKETPFEPVMEADEVEETTEAQAPVEEA) is disordered. The segment covering 32–41 (MEADEVEETT) has biased composition (acidic residues).

It belongs to the GrpE family. As to quaternary structure, homodimer.

The protein resides in the cytoplasm. Functionally, participates actively in the response to hyperosmotic and heat shock by preventing the aggregation of stress-denatured proteins, in association with DnaK and GrpE. It is the nucleotide exchange factor for DnaK and may function as a thermosensor. Unfolded proteins bind initially to DnaJ; upon interaction with the DnaJ-bound protein, DnaK hydrolyzes its bound ATP, resulting in the formation of a stable complex. GrpE releases ADP from DnaK; ATP binding to DnaK triggers the release of the substrate protein, thus completing the reaction cycle. Several rounds of ATP-dependent interactions between DnaJ, DnaK and GrpE are required for fully efficient folding. This is Protein GrpE from Latilactobacillus sakei subsp. sakei (strain 23K) (Lactobacillus sakei subsp. sakei).